Consider the following 573-residue polypeptide: NADP-dependent malic enzyme, chloroplastic (573 aa).

Catalysis depends on Y123, which acts as the Proton donor. R176 lines the NAD(+) pocket. Residue K194 is the Proton acceptor of the active site. The a divalent metal cation site is built by E265, D266, and D289. D289 is a binding site for NAD(+). Residue 318–334 (LFLGAGEAGTGIAELIA) coordinates NADP(+). Residue N430 participates in NAD(+) binding.

The protein belongs to the malic enzymes family. Homotetramer. The cofactor is Mg(2+). Mn(2+) is required as a cofactor.

It localises to the plastid. It is found in the chloroplast. The catalysed reaction is (S)-malate + NADP(+) = pyruvate + CO2 + NADPH. It carries out the reaction oxaloacetate + H(+) = pyruvate + CO2. The protein operates within photosynthesis; C4 acid pathway. Its function is as follows. The chloroplastic ME isoform decarboxylates malate shuttled from neighboring mesophyll cells. The CO(2) released is then refixed by ribulose-bisphosphate carboxylase. This pathway eliminates the photorespiratory loss of CO(2) that occurs in most plants. This chain is NADP-dependent malic enzyme, chloroplastic, found in Solanum lycopersicum (Tomato).